We begin with the raw amino-acid sequence, 214 residues long: Calcineurin B-like protein 8 (214 aa).

4 EF-hand domains span residues 35–70 (EIEA…RNGS), 71–106 (MQNL…FHPY), 108–143 (PEHE…LLGE), and 152–187 (SIEA…NPSI). Positions 165, 167, 169, 171, and 176 each coordinate Ca(2+). A Phosphoserine modification is found at Ser-205.

Belongs to the calcineurin regulatory subunit family. Interacts with CIPK23. Interacts with CIPK14 at the cell membrane exclusively.

Its subcellular location is the cytoplasm. The protein localises to the nucleus. The protein resides in the cell membrane. Functionally, acts as a calcium sensor. CBL proteins interact with CIPK serine-threonine protein kinases. Binding of a CBL protein to the regulatory NAF domain of a CIPK protein lead to the activation of the kinase in a calcium-dependent manner. The chain is Calcineurin B-like protein 8 (CBL8) from Arabidopsis thaliana (Mouse-ear cress).